The sequence spans 233 residues: Leucyl/phenylalanyl-tRNA--protein transferase (233 aa).

It belongs to the L/F-transferase family.

Its subcellular location is the cytoplasm. It catalyses the reaction N-terminal L-lysyl-[protein] + L-leucyl-tRNA(Leu) = N-terminal L-leucyl-L-lysyl-[protein] + tRNA(Leu) + H(+). The catalysed reaction is N-terminal L-arginyl-[protein] + L-leucyl-tRNA(Leu) = N-terminal L-leucyl-L-arginyl-[protein] + tRNA(Leu) + H(+). The enzyme catalyses L-phenylalanyl-tRNA(Phe) + an N-terminal L-alpha-aminoacyl-[protein] = an N-terminal L-phenylalanyl-L-alpha-aminoacyl-[protein] + tRNA(Phe). In terms of biological role, functions in the N-end rule pathway of protein degradation where it conjugates Leu, Phe and, less efficiently, Met from aminoacyl-tRNAs to the N-termini of proteins containing an N-terminal arginine or lysine. The polypeptide is Leucyl/phenylalanyl-tRNA--protein transferase (Laribacter hongkongensis (strain HLHK9)).